Here is a 75-residue protein sequence, read N- to C-terminus: Probable protein BRICK1-B (75 aa).

Positions 41–72 (MSCRSRLATLNEKLTTLERRIEYIEARVTKGE) form a coiled coil.

It belongs to the BRK1 family.

It is found in the cytoplasm. Its subcellular location is the cytoskeleton. In terms of biological role, involved in regulation of actin and microtubule organization. Part of a WAVE complex that activates the Arp2/3 complex. In Xenopus laevis (African clawed frog), this protein is Probable protein BRICK1-B (brk1-b).